Consider the following 245-residue polypeptide: uncharacterized protein (245 aa).

The next 2 helical transmembrane spans lie at 29–51 and 61–83; these read LVVL…RIGM and TILF…LMLH.

Its subcellular location is the cell membrane. This is an uncharacterized protein from Treponema pallidum (strain Nichols).